A 755-amino-acid chain; its full sequence is uncharacterized protein (755 aa).

Disordered stretches follow at residues 1–44, 72–91, 99–174, 393–467, 523–545, 584–672, and 734–755; these read MAAP…AAAQ, AEHSFSTLPPETGSVGATAQ, FSLS…IPHY, TTNV…SSSR, LPKTTGDTDPSGQATGGVTEGGG, VSSS…LPSG, and QAATAGSQPSSRRSSPTSPRRK. Composition is skewed to low complexity over residues 10–25 and 35–44; these read TTTQITQTGQTTTTTT and TTTGSGAAAQ. 3 stretches are compositionally biased toward low complexity: residues 112 to 130, 139 to 151, and 393 to 412; these read ISSSSDGSSISRTSSNASS, SPDLGDLDSLSGS, and TTNVTTEEGGGTNITSTKST. Acidic residues predominate over residues 429 to 446; sequence IEEDTIQFDDPGQGEDDN. Positions 452–462 are enriched in pro residues; the sequence is NTPPPPGPPPN. The segment covering 536-545 has biased composition (gly residues); the sequence is ATGGVTEGGG. A compositionally biased stretch (polar residues) spans 590–599; sequence LPQPQVATTI. Composition is skewed to low complexity over residues 600–666 and 740–755; these read TPQA…QTPQ and SQPSSRRSSPTSPRRK.

Belongs to the chlamydial CPn_0572/CT_456/TC_0741 family.

This is an uncharacterized protein from Chlamydia pneumoniae (Chlamydophila pneumoniae).